The following is a 129-amino-acid chain: uncharacterized protein (129 aa).

Residues 84 to 98 (QKTVSKKYKSRKGRR) are compositionally biased toward basic residues. The interval 84 to 129 (QKTVSKKYKSRKGRRYTRERNISSEKNKTDKSHKVRVGKIQNINND) is disordered. The span at 99–115 (YTRERNISSEKNKTDKS) shows a compositional bias: basic and acidic residues.

This is an uncharacterized protein from Acanthamoeba polyphaga mimivirus (APMV).